The chain runs to 441 residues: Proline--tRNA ligase (441 aa).

The protein belongs to the class-II aminoacyl-tRNA synthetase family. ProS type 2 subfamily. In terms of assembly, homodimer.

The protein resides in the cytoplasm. It carries out the reaction tRNA(Pro) + L-proline + ATP = L-prolyl-tRNA(Pro) + AMP + diphosphate. Catalyzes the attachment of proline to tRNA(Pro) in a two-step reaction: proline is first activated by ATP to form Pro-AMP and then transferred to the acceptor end of tRNA(Pro). The polypeptide is Proline--tRNA ligase (Bartonella tribocorum (strain CIP 105476 / IBS 506)).